A 436-amino-acid polypeptide reads, in one-letter code: Adenylyltransferase and sulfurtransferase UBA4 (436 aa).

Residues glycine 74, aspartate 95, 102–106, lysine 119, and 163–164 contribute to the ATP site; these read SNLHR and DT. Zn(2+) is bound by residues cysteine 205 and cysteine 208. Cysteine 222 acts as the Glycyl thioester intermediate; for adenylyltransferase activity in catalysis. Zn(2+) is bound by residues cysteine 283 and cysteine 286. In terms of domain architecture, Rhodanese spans 335 to 434; sequence NEKDHILIDV…YIDEEDHSYP (100 aa). The Cysteine persulfide intermediate; for sulfurtransferase activity role is filled by cysteine 393.

It in the N-terminal section; belongs to the HesA/MoeB/ThiF family. UBA4 subfamily. The cofactor is Zn(2+).

The protein localises to the cytoplasm. The protein resides in the cytosol. It functions in the pathway tRNA modification; 5-methoxycarbonylmethyl-2-thiouridine-tRNA biosynthesis. Its function is as follows. Plays a central role in 2-thiolation of mcm(5)S(2)U at tRNA wobble positions of cytosolic tRNA(Lys), tRNA(Glu) and tRNA(Gln). Acts by mediating the C-terminal thiocarboxylation of sulfur carrier URM1. Its N-terminus first activates URM1 as acyl-adenylate (-COAMP), then the persulfide sulfur on the catalytic cysteine is transferred to URM1 to form thiocarboxylation (-COSH) of its C-terminus. The reaction probably involves hydrogen sulfide that is generated from the persulfide intermediate and that acts as a nucleophile towards URM1. Subsequently, a transient disulfide bond is formed. Does not use thiosulfate as sulfur donor; NFS1 probably acting as a sulfur donor for thiocarboxylation reactions. Prior mcm(5) tRNA modification by the elongator complex is required for 2-thiolation. May also be involved in protein urmylation. This is Adenylyltransferase and sulfurtransferase UBA4 from Vanderwaltozyma polyspora (strain ATCC 22028 / DSM 70294 / BCRC 21397 / CBS 2163 / NBRC 10782 / NRRL Y-8283 / UCD 57-17) (Kluyveromyces polysporus).